Here is a 106-residue protein sequence, read N- to C-terminus: MNKLHIKKGDTVYVNAGDYKGKIGCVLKVFLGKQRALVEGVNIISKTIKPSAKNPQGGFEKKEASIHISNLNVLDPKTGKPVRIGRKLGERGMLIRFSKKSGDEIK.

It belongs to the universal ribosomal protein uL24 family. As to quaternary structure, part of the 50S ribosomal subunit.

Functionally, one of two assembly initiator proteins, it binds directly to the 5'-end of the 23S rRNA, where it nucleates assembly of the 50S subunit. Its function is as follows. One of the proteins that surrounds the polypeptide exit tunnel on the outside of the subunit. The polypeptide is Large ribosomal subunit protein uL24 (Azobacteroides pseudotrichonymphae genomovar. CFP2).